Consider the following 418-residue polypeptide: Ciliary microtubule-associated protein 2 (418 aa).

As to expression, sperm.

This is Ciliary microtubule-associated protein 2 from Homo sapiens (Human).